The chain runs to 466 residues: ATP synthase subunit beta, sodium ion specific (466 aa).

153-160 (GGAGVGKT) provides a ligand contact to ATP.

It belongs to the ATPase alpha/beta chains family. As to quaternary structure, F-type ATPases have 2 components, CF(1) - the catalytic core - and CF(0) - the membrane proton channel. CF(1) has five subunits: alpha(3), beta(3), gamma(1), delta(1), epsilon(1). CF(0) has three main subunits: a, b and c.

The protein localises to the cell membrane. The enzyme catalyses 4 Na(+)(in) + ATP + H2O = 4 Na(+)(out) + ADP + phosphate + H(+). With respect to regulation, inhibited by nitrate. In terms of biological role, produces ATP from ADP in the presence of a sodium ion gradient across the membrane. The beta chain is the catalytic subunit. The polypeptide is ATP synthase subunit beta, sodium ion specific (Acetobacterium woodii (strain ATCC 29683 / DSM 1030 / JCM 2381 / KCTC 1655 / WB1)).